We begin with the raw amino-acid sequence, 148 residues long: Antigen GM6 (148 aa).

Positions 1 to 22 (KLKASDSRSFLDPMPEGVPLSE) are disordered. 2 tandem repeats follow at residues 1-68 (KLKA…HELA) and 69-136 (KLKA…HELA). The 3; truncated repeat unit spans residues 137-148 (KLKASDSRSFQS).

It localises to the cytoplasm. The protein resides in the cytoskeleton. This chain is Antigen GM6 (GM6), found in Trypanosoma brucei gambiense.